A 1433-amino-acid chain; its full sequence is Pleckstrin homology domain-containing family H member 1 (1433 aa).

The stretch at 40 to 174 (NIRHLLAERM…QILMLQDKLQ (135 aa)) forms a coiled coil. Disordered stretches follow at residues 247–346 (DKAD…LSPP) and 552–634 (SSVP…TSSY). Positions 252–266 (PKSSQDGVDATSTVK) are enriched in polar residues. Residues 279–299 (MRDRAMGGASDRDHSSDELNS) are compositionally biased toward basic and acidic residues. Residues 308-318 (SSSSSSSSSSS) are compositionally biased toward low complexity. Residues 332–343 (TPTPKSPPPVSL) are compositionally biased toward pro residues. The span at 557 to 567 (PDDDSGSEDDS) shows a compositional bias: acidic residues. Positions 568–578 (SSLASLHTSTL) are enriched in low complexity. Over residues 597-606 (VSTSSISSES) the composition is skewed to polar residues. PH domains lie at 643 to 737 (TLEK…NVLK) and 751 to 859 (KPTA…VAAG). A MyTH4 domain is found at 896 to 1050 (FSKEGLRYPL…PSRMEILSIL (155 aa)). The region spanning 1061–1392 (FSIPVHFMNN…SYINYWTSSL (332 aa)) is the FERM domain.

Its function is as follows. Critical component of the guidance pathway underlying endothelial cell migration and blood vessel patterning. Involved in mediating membrane localization of ephrin proteins, which have been shown to provide guidance cues for endothelial cell migration. This Danio rerio (Zebrafish) protein is Pleckstrin homology domain-containing family H member 1 (plekhh1).